The following is a 443-amino-acid chain: Chorionicgonadotropic hormone-like protein (443 aa).

Residues 263–286 show a composition bias toward basic residues; sequence RCAGRPCPRRHRRPCNASKSHRPM. A disordered region spans residues 263–292; the sequence is RCAGRPCPRRHRRPCNASKSHRPMRMQQRD.

To mammalian CGHB.

The protein resides in the secreted. Its subcellular location is the cell wall. Its function is as follows. Cell wall protein that resembles the beta subunit of human chorionic gonadotropin. Stimulates growth and change in morphology. In Stenotrophomonas maltophilia (Pseudomonas maltophilia), this protein is Chorionicgonadotropic hormone-like protein (xcg).